The chain runs to 155 residues: SsrA-binding protein (155 aa).

The segment at 132 to 155 is disordered; the sequence is DKREDLKQKQMKRDVDRAIKDHMR.

Belongs to the SmpB family.

It is found in the cytoplasm. Required for rescue of stalled ribosomes mediated by trans-translation. Binds to transfer-messenger RNA (tmRNA), required for stable association of tmRNA with ribosomes. tmRNA and SmpB together mimic tRNA shape, replacing the anticodon stem-loop with SmpB. tmRNA is encoded by the ssrA gene; the 2 termini fold to resemble tRNA(Ala) and it encodes a 'tag peptide', a short internal open reading frame. During trans-translation Ala-aminoacylated tmRNA acts like a tRNA, entering the A-site of stalled ribosomes, displacing the stalled mRNA. The ribosome then switches to translate the ORF on the tmRNA; the nascent peptide is terminated with the 'tag peptide' encoded by the tmRNA and targeted for degradation. The ribosome is freed to recommence translation, which seems to be the essential function of trans-translation. The sequence is that of SsrA-binding protein from Oceanobacillus iheyensis (strain DSM 14371 / CIP 107618 / JCM 11309 / KCTC 3954 / HTE831).